Here is a 185-residue protein sequence, read N- to C-terminus: Large ribosomal subunit protein uL22 (185 aa).

Belongs to the universal ribosomal protein uL22 family. As to quaternary structure, part of the 50S ribosomal subunit.

Functionally, this protein binds specifically to 23S rRNA. It makes multiple contacts with different domains of the 23S rRNA in the assembled 50S subunit and ribosome. Its function is as follows. The globular domain of the protein is located near the polypeptide exit tunnel on the outside of the subunit, while an extended beta-hairpin is found that lines the wall of the exit tunnel in the center of the 70S ribosome. This is Large ribosomal subunit protein uL22 from Caldivirga maquilingensis (strain ATCC 700844 / DSM 13496 / JCM 10307 / IC-167).